Here is a 754-residue protein sequence, read N- to C-terminus: Polycomb protein mes-3 (754 aa).

The disordered stretch occupies residues 1–83 (MTPATAEVKV…PTKLENIQKT (83 aa)). Over residues 31–40 (ARREEEKENL) the composition is skewed to basic and acidic residues. Over residues 51 to 61 (SSEAGSSRESS) the composition is skewed to low complexity.

In terms of assembly, forms a heterotrimeric complex with the Polycomb proteins mes-2 and mes-3. Does not interact with mes-4. Interacts with nyfa-1. In terms of tissue distribution, in adults, it is predominantly expressed in the germline, and weakly expressed in intestinal cells.

The protein localises to the nucleus. Functionally, component of a Polycomb group (PcG) complex. PcG proteins act by forming multiprotein complexes, which are required to maintain the transcriptionally repressive state of homeotic genes throughout development. In association with the nfya-1-NF-Y complex, may play a role in repressing the expression of the homeobox protein egl-5 in tissues such as the head. PcG proteins are not required to initiate repression, but to maintain it during later stages of development. The mes-2/mes-3/mes-6 complex may participate in the global inactivation of the X chromosomes in germline cells. The complex may act via methylation of histone H3 'Lys-27', rendering chromatin heritably changed in its expressibility. This complex is required to exclude mes-4 from the inactivated X-chromosomes in germline cells. This chain is Polycomb protein mes-3, found in Caenorhabditis elegans.